A 389-amino-acid chain; its full sequence is 5-amino-6-(D-ribitylamino)uracil--L-tyrosine 4-hydroxyphenyl transferase (389 aa).

The Radical SAM core domain occupies 56–298; that stretch reads VSYVINRNIN…QAVARLFFGR (243 aa). Residues Cys-70, Cys-74, and Cys-77 each coordinate [4Fe-4S] cluster.

The protein belongs to the radical SAM superfamily. CofH family. Consists of two subunits, CofG and CofH. It depends on [4Fe-4S] cluster as a cofactor.

It catalyses the reaction 5-amino-6-(D-ribitylamino)uracil + L-tyrosine + S-adenosyl-L-methionine = 5-amino-5-(4-hydroxybenzyl)-6-(D-ribitylimino)-5,6-dihydrouracil + 2-iminoacetate + 5'-deoxyadenosine + L-methionine + H(+). It functions in the pathway cofactor biosynthesis; coenzyme F0 biosynthesis. Its function is as follows. Catalyzes the radical-mediated synthesis of 5-amino-5-(4-hydroxybenzyl)-6-(D-ribitylimino)-5,6-dihydrouracil from 5-amino-6-(D-ribitylamino)uracil and L-tyrosine. The chain is 5-amino-6-(D-ribitylamino)uracil--L-tyrosine 4-hydroxyphenyl transferase from Gloeobacter violaceus (strain ATCC 29082 / PCC 7421).